Here is a 310-residue protein sequence, read N- to C-terminus: N-acetyl-gamma-glutamyl-phosphate reductase (310 aa).

The active site involves C117.

Belongs to the NAGSA dehydrogenase family. Type 2 subfamily.

The protein localises to the cytoplasm. The catalysed reaction is N-acetyl-L-glutamate 5-semialdehyde + phosphate + NADP(+) = N-acetyl-L-glutamyl 5-phosphate + NADPH + H(+). It functions in the pathway amino-acid biosynthesis; L-arginine biosynthesis; N(2)-acetyl-L-ornithine from L-glutamate: step 3/4. Catalyzes the NADPH-dependent reduction of N-acetyl-5-glutamyl phosphate to yield N-acetyl-L-glutamate 5-semialdehyde. This is N-acetyl-gamma-glutamyl-phosphate reductase from Rhizobium leguminosarum bv. trifolii (strain WSM2304).